A 196-amino-acid chain; its full sequence is Imidazoleglycerol-phosphate dehydratase (196 aa).

This sequence belongs to the imidazoleglycerol-phosphate dehydratase family.

Its subcellular location is the cytoplasm. It catalyses the reaction D-erythro-1-(imidazol-4-yl)glycerol 3-phosphate = 3-(imidazol-4-yl)-2-oxopropyl phosphate + H2O. Its pathway is amino-acid biosynthesis; L-histidine biosynthesis; L-histidine from 5-phospho-alpha-D-ribose 1-diphosphate: step 6/9. The protein is Imidazoleglycerol-phosphate dehydratase of Ralstonia nicotianae (strain ATCC BAA-1114 / GMI1000) (Ralstonia solanacearum).